A 447-amino-acid polypeptide reads, in one-letter code: ATP-dependent protease ATPase subunit HslU (447 aa).

ATP-binding positions include isoleucine 18, 60–65 (GVGKTE), aspartate 259, glutamate 325, and arginine 397.

Belongs to the ClpX chaperone family. HslU subfamily. In terms of assembly, a double ring-shaped homohexamer of HslV is capped on each side by a ring-shaped HslU homohexamer. The assembly of the HslU/HslV complex is dependent on binding of ATP.

The protein localises to the cytoplasm. Its function is as follows. ATPase subunit of a proteasome-like degradation complex; this subunit has chaperone activity. The binding of ATP and its subsequent hydrolysis by HslU are essential for unfolding of protein substrates subsequently hydrolyzed by HslV. HslU recognizes the N-terminal part of its protein substrates and unfolds these before they are guided to HslV for hydrolysis. This Burkholderia ambifaria (strain MC40-6) protein is ATP-dependent protease ATPase subunit HslU.